Consider the following 106-residue polypeptide: UPF0145 protein Nmul_A0734 (106 aa).

Belongs to the UPF0145 family.

This chain is UPF0145 protein Nmul_A0734, found in Nitrosospira multiformis (strain ATCC 25196 / NCIMB 11849 / C 71).